The following is a 566-amino-acid chain: Arginine--tRNA ligase (566 aa).

Positions 121–131 (ANPNGPFHIGH) match the 'HIGH' region motif.

Belongs to the class-I aminoacyl-tRNA synthetase family.

The protein localises to the cytoplasm. The catalysed reaction is tRNA(Arg) + L-arginine + ATP = L-arginyl-tRNA(Arg) + AMP + diphosphate. The chain is Arginine--tRNA ligase from Methanococcus maripaludis (strain C5 / ATCC BAA-1333).